The primary structure comprises 301 residues: Aldose reductase (301 aa).

11–20 (GKEIPTVGLG) provides a ligand contact to NADP(+). The Proton donor role is filled by tyrosine 51. Residue histidine 111 coordinates substrate. An NADP(+)-binding site is contributed by 209–266 (SSLGSAPGSSAKVRDDKTIKAIAKKYGCAPSQIILSYITAQGICVIPKSRSKEHLREN).

The protein belongs to the aldo/keto reductase family.

The protein localises to the cytoplasm. It carries out the reaction an alditol + NAD(+) = an aldose + NADH + H(+). It catalyses the reaction an alditol + NADP(+) = an aldose + NADPH + H(+). Its function is as follows. Catalyzes the NADPH-dependent reduction of a wide variety of carbonyl-containing compounds to their corresponding alcohols with a broad range of catalytic efficiencies. This is Aldose reductase from Encephalitozoon cuniculi (strain GB-M1) (Microsporidian parasite).